A 123-amino-acid polypeptide reads, in one-letter code: Large ribosomal subunit protein uL14 (123 aa).

The protein belongs to the universal ribosomal protein uL14 family. Part of the 50S ribosomal subunit. Forms a cluster with proteins L3 and L19. In the 70S ribosome, L14 and L19 interact and together make contacts with the 16S rRNA in bridges B5 and B8.

In terms of biological role, binds to 23S rRNA. Forms part of two intersubunit bridges in the 70S ribosome. The polypeptide is Large ribosomal subunit protein uL14 (Aliivibrio salmonicida (strain LFI1238) (Vibrio salmonicida (strain LFI1238))).